The primary structure comprises 263 residues: N-acyl homoserine lactonase AttM (263 aa).

The Zn(2+) site is built by His-103, His-105, Asp-107, His-108, His-180, Asp-202, and His-247.

The protein belongs to the metallo-beta-lactamase superfamily. It depends on Zn(2+) as a cofactor.

It carries out the reaction an N-acyl-L-homoserine lactone + H2O = an N-acyl-L-homoserine + H(+). This chain is N-acyl homoserine lactonase AttM (attM), found in Rhizobium radiobacter (Agrobacterium tumefaciens).